The chain runs to 194 residues: dITP/XTP pyrophosphatase (194 aa).

8–13 (TSNPGK) lines the substrate pocket. Mg(2+)-binding residues include E38 and D67. Residue D67 is the Proton acceptor of the active site. Substrate is bound by residues S68, 152-155 (FGYD), K175, and 180-181 (HR).

Belongs to the HAM1 NTPase family. In terms of assembly, homodimer. Mg(2+) serves as cofactor.

The enzyme catalyses XTP + H2O = XMP + diphosphate + H(+). It catalyses the reaction dITP + H2O = dIMP + diphosphate + H(+). The catalysed reaction is ITP + H2O = IMP + diphosphate + H(+). Its function is as follows. Pyrophosphatase that catalyzes the hydrolysis of nucleoside triphosphates to their monophosphate derivatives, with a high preference for the non-canonical purine nucleotides XTP (xanthosine triphosphate), dITP (deoxyinosine triphosphate) and ITP. Seems to function as a house-cleaning enzyme that removes non-canonical purine nucleotides from the nucleotide pool, thus preventing their incorporation into DNA/RNA and avoiding chromosomal lesions. The chain is dITP/XTP pyrophosphatase from Legionella pneumophila (strain Paris).